Consider the following 316-residue polypeptide: Protoheme IX farnesyltransferase (316 aa).

9 helical membrane passes run 32–52 (VMSL…THVN), 53–73 (PIIG…SGAL), 98–118 (VARE…VITL), 120–140 (FVAN…YVVI), 153–173 (IVIG…AVAG), 180–200 (LALF…LALV), 226–246 (ILLY…IGFA), 251–271 (GLLS…VYLA), and 280–300 (VAMR…AAIV).

Belongs to the UbiA prenyltransferase family. Protoheme IX farnesyltransferase subfamily.

Its subcellular location is the cell inner membrane. The catalysed reaction is heme b + (2E,6E)-farnesyl diphosphate + H2O = Fe(II)-heme o + diphosphate. Its pathway is porphyrin-containing compound metabolism; heme O biosynthesis; heme O from protoheme: step 1/1. Functionally, converts heme B (protoheme IX) to heme O by substitution of the vinyl group on carbon 2 of heme B porphyrin ring with a hydroxyethyl farnesyl side group. This is Protoheme IX farnesyltransferase from Methylocella silvestris (strain DSM 15510 / CIP 108128 / LMG 27833 / NCIMB 13906 / BL2).